A 478-amino-acid chain; its full sequence is Kynureninase (478 aa).

Pyridoxal 5'-phosphate-binding positions include Leu-138, Thr-139, 166-169 (FPSD), Asp-252, His-255, and Tyr-277. Lys-278 bears the N6-(pyridoxal phosphate)lysine mark. Trp-315 and Asn-343 together coordinate pyridoxal 5'-phosphate.

This sequence belongs to the kynureninase family. As to quaternary structure, homodimer. Pyridoxal 5'-phosphate serves as cofactor.

The protein resides in the cytoplasm. It carries out the reaction L-kynurenine + H2O = anthranilate + L-alanine + H(+). The enzyme catalyses 3-hydroxy-L-kynurenine + H2O = 3-hydroxyanthranilate + L-alanine + H(+). It functions in the pathway amino-acid degradation; L-kynurenine degradation; L-alanine and anthranilate from L-kynurenine: step 1/1. It participates in cofactor biosynthesis; NAD(+) biosynthesis; quinolinate from L-kynurenine: step 2/3. Its function is as follows. Catalyzes the cleavage of L-kynurenine (L-Kyn) and L-3-hydroxykynurenine (L-3OHKyn) into anthranilic acid (AA) and 3-hydroxyanthranilic acid (3-OHAA), respectively. The sequence is that of Kynureninase from Coccidioides immitis (strain RS) (Valley fever fungus).